The following is a 557-amino-acid chain: Anthrax toxin receptor-like (557 aa).

Positions 1 to 25 (MRSHGRWGPCFLLFLLLLPPPLFRA) are cleaved as a signal peptide. Residues 26–345 (GSLRYHGPGW…KSNVSVTSST (320 aa)) are Extracellular-facing. The VWFA domain maps to 74-244 (DLYFILDKSG…KAMRDTVDAL (171 aa)). A divalent metal cation contacts are provided by Ser-82, Ser-84, and Thr-148. A helical membrane pass occupies residues 346–366 (CGIFSNWLYFLLPLLLLPLLL). Over 367-557 (CCLWRLCRKK…PTSKAPNTQD (191 aa)) the chain is Cytoplasmic. Disordered regions lie at residues 380 to 411 (EPPPVQKPEKEPEQEKPPPPPPPSPPPPLPPP) and 497 to 557 (ESPS…NTQD). Residues 386–395 (KPEKEPEQEK) show a composition bias toward basic and acidic residues. Pro residues predominate over residues 396–411 (PPPPPPPSPPPPLPPP). The segment covering 534-557 (GTLQNPLCPSLPRSPTSKAPNTQD) has biased composition (polar residues).

Belongs to the ATR family.

It is found in the membrane. This Macaca fascicularis (Crab-eating macaque) protein is Anthrax toxin receptor-like (ANTXRL).